Consider the following 167-residue polypeptide: MSDESKPIEEPPIESKPQEEQDTEKESLTNSEESKKRAVEPSTDKKKKRRRRNYDEEDKELEKEEAKEKNAKTENNEEGDDDEDDEDDDYEQGKLEDEEEEEDELLEIDESNIITTGRRTRGKVIDFTKAAEELDKERGVVAEEDEEEEEEEEKENEDDDFKEQVQN.

Disordered stretches follow at residues 1–116 (MSDE…IITT) and 131–167 (AEELDKERGVVAEEDEEEEEEEEKENEDDDFKEQVQN). Basic and acidic residues-rich tracts occupy residues 16–44 (KPQEEQDTEKESLTNSEESKKRAVEPSTD) and 60–75 (ELEKEEAKEKNAKTEN). Over residues 76–110 (NEEGDDDEDDEDDDYEQGKLEDEEEEEDELLEIDE) the composition is skewed to acidic residues. Basic and acidic residues predominate over residues 131–141 (AEELDKERGVV). Residues 142-161 (AEEDEEEEEEEEKENEDDDF) are compositionally biased toward acidic residues.

The protein belongs to the CHZ1 family. In terms of assembly, forms a heterotrimer with H2A.Z-H2B, stabilizing the association of the histone dimer. Also, with a lower affinity, forms a heterotrimer with H2A-H2B.

The protein resides in the nucleus. Functionally, forms a chaperone-bound H2A.Z-H2B complex that acts as a source for SWR1 complex-dependent H2A to H2A.Z histone replacement in chromatin. The protein is Histone H2A.Z-specific chaperone CHZ1 (CHZ1) of Candida albicans (strain SC5314 / ATCC MYA-2876) (Yeast).